Consider the following 36-residue polypeptide: Tddefensin (36 aa).

Intrachain disulfides connect C3/C24, C10/C32, and C14/C34.

Belongs to the invertebrate defensin family. As to expression, expressed by the venom gland.

The protein resides in the secreted. In terms of biological role, antibacterial peptide mostly active against Gram-positive bacteria. In Tityus discrepans (Venezuelan scorpion), this protein is Tddefensin.